The following is a 362-amino-acid chain: S-adenosylmethionine:tRNA ribosyltransferase-isomerase (362 aa).

It belongs to the QueA family. Monomer.

It is found in the cytoplasm. The enzyme catalyses 7-aminomethyl-7-carbaguanosine(34) in tRNA + S-adenosyl-L-methionine = epoxyqueuosine(34) in tRNA + adenine + L-methionine + 2 H(+). It participates in tRNA modification; tRNA-queuosine biosynthesis. In terms of biological role, transfers and isomerizes the ribose moiety from AdoMet to the 7-aminomethyl group of 7-deazaguanine (preQ1-tRNA) to give epoxyqueuosine (oQ-tRNA). The sequence is that of S-adenosylmethionine:tRNA ribosyltransferase-isomerase from Syntrophus aciditrophicus (strain SB).